Consider the following 176-residue polypeptide: Large ribosomal subunit protein uL10 (176 aa).

The protein belongs to the universal ribosomal protein uL10 family. Part of the ribosomal stalk of the 50S ribosomal subunit. The N-terminus interacts with L11 and the large rRNA to form the base of the stalk. The C-terminus forms an elongated spine to which L12 dimers bind in a sequential fashion forming a multimeric L10(L12)X complex.

In terms of biological role, forms part of the ribosomal stalk, playing a central role in the interaction of the ribosome with GTP-bound translation factors. The chain is Large ribosomal subunit protein uL10 from Streptomyces avermitilis (strain ATCC 31267 / DSM 46492 / JCM 5070 / NBRC 14893 / NCIMB 12804 / NRRL 8165 / MA-4680).